A 163-amino-acid chain; its full sequence is F-box protein At2g35280 (163 aa).

The F-box domain maps to 8–57; it reads ISRLEALPQDLLREIVAKIGVKSAEDYHNCILSCKELGASANDERVLKTL.

The polypeptide is F-box protein At2g35280 (Arabidopsis thaliana (Mouse-ear cress)).